A 668-amino-acid chain; its full sequence is DNA ligase (668 aa).

NAD(+) is bound by residues 31 to 35, 80 to 81, and E111; these read DYDFD and SL. Catalysis depends on K113, which acts as the N6-AMP-lysine intermediate. NAD(+) is bound by residues R134, E170, K285, and K309. The Zn(2+) site is built by C403, C406, C421, and C427. The BRCT domain maps to 587-668; that stretch reads NATEKFIGKT…EFITKLNESE (82 aa).

Belongs to the NAD-dependent DNA ligase family. LigA subfamily. The cofactor is Mg(2+). Mn(2+) is required as a cofactor.

The catalysed reaction is NAD(+) + (deoxyribonucleotide)n-3'-hydroxyl + 5'-phospho-(deoxyribonucleotide)m = (deoxyribonucleotide)n+m + AMP + beta-nicotinamide D-nucleotide.. DNA ligase that catalyzes the formation of phosphodiester linkages between 5'-phosphoryl and 3'-hydroxyl groups in double-stranded DNA using NAD as a coenzyme and as the energy source for the reaction. It is essential for DNA replication and repair of damaged DNA. In Flavobacterium johnsoniae (strain ATCC 17061 / DSM 2064 / JCM 8514 / BCRC 14874 / CCUG 350202 / NBRC 14942 / NCIMB 11054 / UW101) (Cytophaga johnsonae), this protein is DNA ligase.